The primary structure comprises 348 residues: Phosphoribosylformylglycinamidine cyclo-ligase (348 aa).

Belongs to the AIR synthase family.

It is found in the cytoplasm. The enzyme catalyses 2-formamido-N(1)-(5-O-phospho-beta-D-ribosyl)acetamidine + ATP = 5-amino-1-(5-phospho-beta-D-ribosyl)imidazole + ADP + phosphate + H(+). It participates in purine metabolism; IMP biosynthesis via de novo pathway; 5-amino-1-(5-phospho-D-ribosyl)imidazole from N(2)-formyl-N(1)-(5-phospho-D-ribosyl)glycinamide: step 2/2. The protein is Phosphoribosylformylglycinamidine cyclo-ligase of Aromatoleum aromaticum (strain DSM 19018 / LMG 30748 / EbN1) (Azoarcus sp. (strain EbN1)).